The chain runs to 183 residues: Oleosin-B2 (183 aa).

Residues 1–23 are polar; that stretch reads QASIFSRFFRMFSFIFPFVNVIK. Helical transmembrane passes span 24-44, 46-66, and 72-92; these read LIIASVTSLVCLAFSCVALGG, AVALIVSTPLFIMFSPILVPA, and LLASGLMAGTTLGLTGIGLIM. The tract at residues 24 to 95 is hydrophobic; that stretch reads LIIASVTSLV…TGIGLIMGLV (72 aa).

This sequence belongs to the oleosin family. As to expression, the full-length protein is found in the tapetal lipid bodies of immature anthers, the proteolytically cleaved C-terminal product is found on the coats of pollen grains. Not present in seeds.

It localises to the lipid droplet. Its subcellular location is the membrane. Many of the major pollen coat proteins are derived from endoproteolytic cleavage of oleosin-like proteins. The polypeptide is Oleosin-B2 (OlnB2) (Brassica napus (Rape)).